A 331-amino-acid chain; its full sequence is Fructose-1,6-bisphosphatase class 1 (331 aa).

The Mg(2+) site is built by glutamate 100, aspartate 120, leucine 122, and aspartate 123. Residues 123–126 (DGSS), asparagine 216, tyrosine 243, 261–263 (YLY), and lysine 273 each bind substrate. Glutamate 279 contributes to the Mg(2+) binding site.

It belongs to the FBPase class 1 family. Homotetramer. Mg(2+) serves as cofactor.

The protein resides in the cytoplasm. It carries out the reaction beta-D-fructose 1,6-bisphosphate + H2O = beta-D-fructose 6-phosphate + phosphate. It functions in the pathway carbohydrate biosynthesis; gluconeogenesis. This is Fructose-1,6-bisphosphatase class 1 from Amoebophilus asiaticus (strain 5a2).